A 274-amino-acid polypeptide reads, in one-letter code: MDSLNYTTACDSAVETENQSDNSSSGSSLFKTQCVPVPPKRRQRNTIRKFVHIPKNTQATESSSDSSIEPRPLTLKAIFERFKNKKRKRKKKKYKPTGRSVGRPKGRRTTRYSQITEKQFKDKRPGFPFLESENGRKPLPWRKILTFEQAVARGFFNYLEKLKYEYYLKESLKQMNVAEDLEKDDLDSRRYRYLDDDGSLSPIEESAAEEETAANLEHDECDIKLVENSYFIISSEFPKKKQNVHLDQEEYTEETALLKKRTSKSKHWIEDKMA.

Polar residues predominate over residues 1-19 (MDSLNYTTACDSAVETENQ). Disordered regions lie at residues 1-45 (MDSL…RQRN) and 84-111 (NKKR…RTTR). Residue Ser-20 is modified to Phosphoserine. Positions 84 to 110 (NKKRKRKKKKYKPTGRSVGRPKGRRTT) are enriched in basic residues. Residues Ser-132 and Ser-229 each carry the phosphoserine modification.

Component of the transcription factor SL1/TIF-IB complex, composed of TBP and at least TAF1A, TAF1B, TAF1C and TAF1D. Interacts with UBTF.

The protein resides in the nucleus. In terms of biological role, component of the transcription factor SL1/TIF-IB complex, which is involved in the assembly of the PIC (preinitiation complex) during RNA polymerase I-dependent transcription. The rate of PIC formation probably is primarily dependent on the rate of association of SL1/TIF-IB with the rDNA promoter. SL1/TIF-IB is involved in stabilization of nucleolar transcription factor 1/UBTF on rDNA. Formation of SL1/TIF-IB excludes the association of TBP with TFIID subunits. The protein is TATA box-binding protein-associated factor RNA polymerase I subunit D (TAF1D) of Bos taurus (Bovine).